A 213-amino-acid chain; its full sequence is Triosephosphate isomerase (213 aa).

7 to 9 (NLK) provides a ligand contact to substrate. The Electrophile role is filled by H88. E136 (proton acceptor) is an active-site residue. I141 and G174 together coordinate substrate.

This sequence belongs to the triosephosphate isomerase family. As to quaternary structure, homotetramer; dimer of dimers.

The protein resides in the cytoplasm. The enzyme catalyses D-glyceraldehyde 3-phosphate = dihydroxyacetone phosphate. It functions in the pathway carbohydrate biosynthesis; gluconeogenesis. It participates in carbohydrate degradation; glycolysis; D-glyceraldehyde 3-phosphate from glycerone phosphate: step 1/1. Functionally, involved in the gluconeogenesis. Catalyzes stereospecifically the conversion of dihydroxyacetone phosphate (DHAP) to D-glyceraldehyde-3-phosphate (G3P). This Thermoplasma volcanium (strain ATCC 51530 / DSM 4299 / JCM 9571 / NBRC 15438 / GSS1) protein is Triosephosphate isomerase.